The following is a 404-amino-acid chain: Pyruvate-flavodoxin oxidoreductase (404 aa).

The protein belongs to the pyruvate:ferredoxin/flavodoxin oxidoreductase family.

The enzyme catalyses oxidized [flavodoxin] + pyruvate + CoA + 2 H(+) = reduced [flavodoxin] + acetyl-CoA + CO2. In terms of biological role, oxidoreductase required for the transfer of electrons from pyruvate to flavodoxin, which reduces nitrogenase. The protein is Pyruvate-flavodoxin oxidoreductase (nifJ) of Nostoc sp. (strain ATCC 29151 / PCC 7119) (Anabaena sp.).